A 360-amino-acid polypeptide reads, in one-letter code: Photosystem II protein D1 2 (360 aa).

3 helical membrane passes run 29–46 (YVGWFGVLMIPTLLTATI), 118–133 (HFLIGVFCYMGREWEL), and 142–156 (WICVAYSAPVAAATA). Residue H118 participates in chlorophyll a binding. Position 126 (Y126) interacts with pheophytin a. [CaMn4O5] cluster contacts are provided by D170 and E189. A helical transmembrane segment spans residues 197–218 (FHMLGVAGVFGGSLFSAMHGSL). Position 198 (H198) interacts with chlorophyll a. A quinone is bound by residues H215 and 264–265 (SF). H215 is a Fe cation binding site. H272 lines the Fe cation pocket. A helical membrane pass occupies residues 274–288 (FLAAWPVVGIWFTSL). [CaMn4O5] cluster contacts are provided by H332, E333, D342, and A344. The propeptide occupies 345–360 (AGEATPVALTAPAING).

This sequence belongs to the reaction center PufL/M/PsbA/D family. In terms of assembly, PSII is composed of 1 copy each of membrane proteins PsbA, PsbB, PsbC, PsbD, PsbE, PsbF, PsbH, PsbI, PsbJ, PsbK, PsbL, PsbM, PsbT, PsbX, PsbY, PsbZ, Psb30/Ycf12, peripheral proteins PsbO, CyanoQ (PsbQ), PsbU, PsbV and a large number of cofactors. It forms dimeric complexes. Requires The D1/D2 heterodimer binds P680, chlorophylls that are the primary electron donor of PSII, and subsequent electron acceptors. It shares a non-heme iron and each subunit binds pheophytin, quinone, additional chlorophylls, carotenoids and lipids. D1 provides most of the ligands for the Mn4-Ca-O5 cluster of the oxygen-evolving complex (OEC). There is also a Cl(-1) ion associated with D1 and D2, which is required for oxygen evolution. The PSII complex binds additional chlorophylls, carotenoids and specific lipids. as cofactor. Post-translationally, tyr-161 forms a radical intermediate that is referred to as redox-active TyrZ, YZ or Y-Z. C-terminally processed by CtpA; processing is essential to allow assembly of the oxygen-evolving complex and thus photosynthetic growth.

It localises to the cellular thylakoid membrane. It catalyses the reaction 2 a plastoquinone + 4 hnu + 2 H2O = 2 a plastoquinol + O2. In terms of biological role, photosystem II (PSII) is a light-driven water:plastoquinone oxidoreductase that uses light energy to abstract electrons from H(2)O, generating O(2) and a proton gradient subsequently used for ATP formation. It consists of a core antenna complex that captures photons, and an electron transfer chain that converts photonic excitation into a charge separation. The D1/D2 (PsbA/PsbD) reaction center heterodimer binds P680, the primary electron donor of PSII as well as several subsequent electron acceptors. The sequence is that of Photosystem II protein D1 2 from Synechococcus elongatus (strain ATCC 33912 / PCC 7942 / FACHB-805) (Anacystis nidulans R2).